The following is a 515-amino-acid chain: Maturase K (515 aa).

The protein belongs to the intron maturase 2 family. MatK subfamily.

It localises to the plastid. It is found in the chloroplast. In terms of biological role, usually encoded in the trnK tRNA gene intron. Probably assists in splicing its own and other chloroplast group II introns. The chain is Maturase K from Pinus coulteri (Coulter pine).